Reading from the N-terminus, the 100-residue chain is UPF0473 protein lwe1514 (100 aa).

The protein belongs to the UPF0473 family.

This Listeria welshimeri serovar 6b (strain ATCC 35897 / DSM 20650 / CCUG 15529 / CIP 8149 / NCTC 11857 / SLCC 5334 / V8) protein is UPF0473 protein lwe1514.